We begin with the raw amino-acid sequence, 340 residues long: Glyceraldehyde-3-phosphate dehydrogenase (340 aa).

NAD(+) is bound by residues 11 to 12 and glycine 111; that span reads SI. 140–142 contacts D-glyceraldehyde 3-phosphate; that stretch reads SCN. The active-site Nucleophile is the cysteine 141. Arginine 169 serves as a coordination point for NAD(+). A D-glyceraldehyde 3-phosphate-binding site is contributed by 195–196; sequence HG. Glutamine 303 serves as a coordination point for NAD(+).

It belongs to the glyceraldehyde-3-phosphate dehydrogenase family. In terms of assembly, homotetramer.

It localises to the cytoplasm. The enzyme catalyses D-glyceraldehyde 3-phosphate + phosphate + NADP(+) = (2R)-3-phospho-glyceroyl phosphate + NADPH + H(+). It carries out the reaction D-glyceraldehyde 3-phosphate + phosphate + NAD(+) = (2R)-3-phospho-glyceroyl phosphate + NADH + H(+). The protein operates within carbohydrate degradation; glycolysis; pyruvate from D-glyceraldehyde 3-phosphate: step 1/5. The sequence is that of Glyceraldehyde-3-phosphate dehydrogenase from Methanococcus maripaludis (strain C6 / ATCC BAA-1332).